Consider the following 2082-residue polypeptide: Probable ATP-dependent helicase PF08_0048 (2082 aa).

Residues 66 to 138 form the HSA domain; sequence KIVEPAKTPE…EEKRLKLYSK (73 aa). Over residues 209 to 221 the composition is skewed to low complexity; that stretch reads NNSEIVNNNASSV. 2 disordered regions span residues 209–234 and 301–470; these read NNSE…DDLT and NVIE…SPTR. Composition is skewed to basic and acidic residues over residues 419–448 and 455–465; these read NSDH…HIDN and TGEDYKSDKEN. Positions 476–531 form a coiled coil; it reads KKEKYDEYDTKLKIEKREEENKNYEKDEHEYESDNYDKEKINKKKELILLKNDIEN. A disordered region spans residues 532 to 641; sequence DSDETSEHIK…KNDSDDNDDI (110 aa). The segment covering 536 to 545 has biased composition (basic and acidic residues); the sequence is TSEHIKRDSR. Residues 579 to 598 are compositionally biased toward low complexity; it reads DNNNSENDNNNDNNNDNNND. Residues 599–627 show a composition bias toward acidic residues; that stretch reads NNDDNNDDNNDDNNDDNNDDNNDDNNDDN. The Helicase ATP-binding domain occupies 674–839; sequence LYLYKNNING…WSLLHFLMPN (166 aa). Position 687–694 (687–694) interacts with ATP; the sequence is DEMGLGKT. The DEAH box signature appears at 790 to 793; it reads DEAH. The disordered stretch occupies residues 1199 to 1255; it reads EQNNNNSKDNNNNIDNNNNIDNNNNIDNNNNIDNNNNIDNNNNNIDNNNNIDNHHNN. The Helicase C-terminal domain occupies 1772–1922; the sequence is ALEKLLSKCK…NICINMGNFN (151 aa). Residues 1972-2060 are a coiled coil; it reads EQVENKDKMN…DEMRMKIEIE (89 aa).

Belongs to the SNF2/RAD54 helicase family. SWR1 subfamily. As to quaternary structure, component of a chromatin-remodeling complex.

Its subcellular location is the nucleus. Its function is as follows. Catalytic component of a chromatin remodeling complex. The chain is Probable ATP-dependent helicase PF08_0048 from Plasmodium falciparum (isolate 3D7).